The chain runs to 88 residues: Large ribosomal subunit protein bL31B (88 aa).

It belongs to the bacterial ribosomal protein bL31 family. Type B subfamily. In terms of assembly, part of the 50S ribosomal subunit.

This chain is Large ribosomal subunit protein bL31B, found in Leuconostoc mesenteroides subsp. mesenteroides (strain ATCC 8293 / DSM 20343 / BCRC 11652 / CCM 1803 / JCM 6124 / NCDO 523 / NBRC 100496 / NCIMB 8023 / NCTC 12954 / NRRL B-1118 / 37Y).